The sequence spans 543 residues: Ribonuclease Y (543 aa).

A helical membrane pass occupies residues 4–24; the sequence is IIMIPVATAIVSLLVGTVIGY. Positions 233-296 constitute a KH domain; sequence TVSVVDLPNE…EIAKRAMERL (64 aa). An HD domain is found at 359 to 452; sequence VLSHSIEVGK…VVAADTISSA (94 aa).

The protein belongs to the RNase Y family.

It localises to the cell membrane. Its function is as follows. Endoribonuclease that initiates mRNA decay. This Lactobacillus helveticus (strain DPC 4571) protein is Ribonuclease Y.